Reading from the N-terminus, the 249-residue chain is Small ribosomal subunit protein eS6 (249 aa).

A compositionally biased stretch (basic residues) spans 223 to 238; it reads LRQRDHSKKHTQKVHA. The segment at 223–249 is disordered; it reads LRQRDHSKKHTQKVHAQRAEVAAFQKK.

It belongs to the eukaryotic ribosomal protein eS6 family. In terms of assembly, component of the small ribosomal subunit. Part of the small subunit (SSU) processome, composed of more than 70 proteins and the RNA chaperone small nucleolar RNA (snoRNA) U3. Ribosomal protein S6 is the major substrate of protein kinases in eukaryote ribosomes.

The protein localises to the cytoplasm. The protein resides in the nucleus. It localises to the nucleolus. Functionally, component of the 40S small ribosomal subunit. Plays an important role in controlling cell growth and proliferation through the selective translation of particular classes of mRNA. Part of the small subunit (SSU) processome, first precursor of the small eukaryotic ribosomal subunit. During the assembly of the SSU processome in the nucleolus, many ribosome biogenesis factors, an RNA chaperone and ribosomal proteins associate with the nascent pre-rRNA and work in concert to generate RNA folding, modifications, rearrangements and cleavage as well as targeted degradation of pre-ribosomal RNA by the RNA exosome. The polypeptide is Small ribosomal subunit protein eS6 (RPS6) (Leishmania infantum).